Consider the following 281-residue polypeptide: ATP phosphoribosyltransferase (281 aa).

This sequence belongs to the ATP phosphoribosyltransferase family. Long subfamily. The cofactor is Mg(2+).

The protein localises to the cytoplasm. It catalyses the reaction 1-(5-phospho-beta-D-ribosyl)-ATP + diphosphate = 5-phospho-alpha-D-ribose 1-diphosphate + ATP. Its pathway is amino-acid biosynthesis; L-histidine biosynthesis; L-histidine from 5-phospho-alpha-D-ribose 1-diphosphate: step 1/9. Feedback inhibited by histidine. Functionally, catalyzes the condensation of ATP and 5-phosphoribose 1-diphosphate to form N'-(5'-phosphoribosyl)-ATP (PR-ATP). Has a crucial role in the pathway because the rate of histidine biosynthesis seems to be controlled primarily by regulation of HisG enzymatic activity. In Corynebacterium aurimucosum (strain ATCC 700975 / DSM 44827 / CIP 107346 / CN-1) (Corynebacterium nigricans), this protein is ATP phosphoribosyltransferase.